Here is a 95-residue protein sequence, read N- to C-terminus: Co-chaperonin GroES (95 aa).

This sequence belongs to the GroES chaperonin family. In terms of assembly, heptamer of 7 subunits arranged in a ring. Interacts with the chaperonin GroEL.

Its subcellular location is the cytoplasm. Its function is as follows. Together with the chaperonin GroEL, plays an essential role in assisting protein folding. The GroEL-GroES system forms a nano-cage that allows encapsulation of the non-native substrate proteins and provides a physical environment optimized to promote and accelerate protein folding. GroES binds to the apical surface of the GroEL ring, thereby capping the opening of the GroEL channel. The protein is Co-chaperonin GroES of Rickettsia conorii (strain ATCC VR-613 / Malish 7).